We begin with the raw amino-acid sequence, 75 residues long: uncharacterized protein (75 aa).

The SpoVT-AbrB domain occupies threonine 3–glutamate 45.

The protein belongs to the VapB family.

This is an uncharacterized protein from Escherichia coli (strain K12).